A 153-amino-acid chain; its full sequence is 6,7-dimethyl-8-ribityllumazine synthase (153 aa).

5-amino-6-(D-ribitylamino)uracil is bound by residues phenylalanine 21, 55–57 (AFE), and 79–81 (TVI). Residue 84–85 (AT) participates in (2S)-2-hydroxy-3-oxobutyl phosphate binding. Histidine 87 acts as the Proton donor in catalysis. Phenylalanine 112 contributes to the 5-amino-6-(D-ribitylamino)uracil binding site. Residue arginine 126 participates in (2S)-2-hydroxy-3-oxobutyl phosphate binding.

The protein belongs to the DMRL synthase family. In terms of assembly, forms an icosahedral capsid composed of 60 subunits, arranged as a dodecamer of pentamers.

The catalysed reaction is (2S)-2-hydroxy-3-oxobutyl phosphate + 5-amino-6-(D-ribitylamino)uracil = 6,7-dimethyl-8-(1-D-ribityl)lumazine + phosphate + 2 H2O + H(+). It participates in cofactor biosynthesis; riboflavin biosynthesis; riboflavin from 2-hydroxy-3-oxobutyl phosphate and 5-amino-6-(D-ribitylamino)uracil: step 1/2. Its function is as follows. Catalyzes the formation of 6,7-dimethyl-8-ribityllumazine by condensation of 5-amino-6-(D-ribitylamino)uracil with 3,4-dihydroxy-2-butanone 4-phosphate. This is the penultimate step in the biosynthesis of riboflavin. The polypeptide is 6,7-dimethyl-8-ribityllumazine synthase (Bacillus cereus (strain 03BB102)).